Here is a 333-residue protein sequence, read N- to C-terminus: Heat shock transcription factor, X-linked member 3 (333 aa).

The segment at 1–66 (MASQNTEQEY…QDNSPPEDRN (66 aa)) is disordered. Residues 29–39 (GSSPDPNPDSS) are compositionally biased toward low complexity. Polar residues predominate over residues 49–60 (AMSQDPGSQDNS). The DNA-binding element occupies 79–182 (FRLSFPRKLW…PRLLENIQRK (104 aa)). The segment at 227–275 (QGAPSVQGPSGTQSFRRSGMWSKKSATRHPLGNGPPQEPNGPSWEGTSG) is disordered. A compositionally biased stretch (polar residues) spans 228–242 (GAPSVQGPSGTQSFR).

This sequence belongs to the HSF family.

It localises to the nucleus. The polypeptide is Heat shock transcription factor, X-linked member 3 (Homo sapiens (Human)).